Here is a 223-residue protein sequence, read N- to C-terminus: Translation initiation factor 6 (223 aa).

The protein belongs to the eIF-6 family.

In terms of biological role, binds to the 50S ribosomal subunit and prevents its association with the 30S ribosomal subunit to form the 70S initiation complex. The protein is Translation initiation factor 6 of Thermofilum pendens (strain DSM 2475 / Hrk 5).